We begin with the raw amino-acid sequence, 161 residues long: Sterile alpha motif domain-containing protein 12 (161 aa).

Positions 44–64 (QKVPDQKGTPKRLQGEAETAK) are disordered. Residues 77 to 143 (WTQQDVCKWL…LQQVLQLKVR (67 aa)) form the SAM domain.

This Mus musculus (Mouse) protein is Sterile alpha motif domain-containing protein 12 (Samd12).